Consider the following 413-residue polypeptide: Variant surface glycoprotein YnAT 1.3 (413 aa).

The signal sequence occupies residues 1–22 (MLDNSRARSIVHLLILLKAHVI). Residues Asn-91, Asn-361, and Asn-379 are each glycosylated (N-linked (GlcNAc...) asparagine). Asn-379 is lipidated: GPI-anchor amidated asparagine. The propeptide at 380-413 (SSNPTSRQNSVVQEPTTVSAAAITPLILPWTLLI) is removed in mature form.

The protein localises to the cell membrane. Functionally, VSG forms a coat on the surface of the parasite. The trypanosome evades the immune response of the host by expressing a series of antigenically distinct VSGs from an estimated 1000 VSG genes. This chain is Variant surface glycoprotein YnAT 1.3, found in Trypanosoma congolense.